A 424-amino-acid polypeptide reads, in one-letter code: UPF0597 protein Shewmr7_2876 (424 aa).

This sequence belongs to the UPF0597 family.

In Shewanella sp. (strain MR-7), this protein is UPF0597 protein Shewmr7_2876.